The following is a 479-amino-acid chain: GDP-fucose protein O-fucosyltransferase 3 (479 aa).

At 1 to 8 (MVRIQRRK) the chain is on the cytoplasmic side. The chain crosses the membrane as a helical; Signal-anchor for type II membrane protein span at residues 9 to 31 (LLASCLCVTATVFLLVTLQVMVE). At 32–479 (LGKFERKEFK…QEFWGLVFKD (448 aa)) the chain is on the lumenal side. N110 and N168 each carry an N-linked (GlcNAc...) asparagine glycan. C389 and C392 are joined by a disulfide.

This sequence belongs to the glycosyltransferase 10 family. As to expression, expressed in lung, digestive tract, gall bladder, placenta, kidney, uterus and brain. Not detected in spleen, heart, muscle, liver and pancreas.

The protein localises to the endoplasmic reticulum membrane. Its subcellular location is the golgi apparatus membrane. It is found in the golgi apparatus. The protein resides in the lysosome. The enzyme catalyses L-threonyl-[protein] + GDP-beta-L-fucose = 3-O-(alpha-L-fucosyl)-L-threonyl-[protein] + GDP + H(+). It carries out the reaction L-seryl-[protein] + GDP-beta-L-fucose = 3-O-(alpha-L-fucosyl)-L-seryl-[protein] + GDP + H(+). It participates in protein modification; protein glycosylation. Functionally, protein O-fucosyltransferase that specifically catalyzes O-fucosylation of serine or threonine residues in EMI domains of target proteins, such as MMRN1, MMRN2 and EMID1. Attaches fucose through an O-glycosidic linkage. O-fucosylation of EMI domain-containing proteins may be required for facilitating protein folding and secretion. May also show alpha-(1,3)-fucosyltransferase activity toward the innermost N-acetyl glucosamine (GlcNAc) residue in biantennary N-glycan acceptors. However, this was tested with a library of synthetic substrates and this activity is unsure in vivo. May be involved in biosynthesis of Lewis X-carrying biantennary N-glycans that regulate neuron stem cell self-renewal during brain development. In Homo sapiens (Human), this protein is GDP-fucose protein O-fucosyltransferase 3.